Here is a 341-residue protein sequence, read N- to C-terminus: Zinc transporter ZIP11 (341 aa).

7 helical membrane passes run 12–32 (LLGT…VFVF), 44–64 (LGFA…APAV), 72–92 (GFGS…AAFV), 193–213 (IALL…AVGV), 262–284 (FWYG…FAVV), 289–306 (ILPY…YVIM), and 321–341 (LASW…VGLG).

The protein belongs to the ZIP transporter (TC 2.A.5) family.

It localises to the cell membrane. It is found in the nucleus. Its subcellular location is the cytoplasm. The protein localises to the golgi apparatus. It carries out the reaction Zn(2+)(in) = Zn(2+)(out). The enzyme catalyses Cu(2+)(in) = Cu(2+)(out). Zinc importer that regulates cytosolic zinc concentrations either via zinc influx from the extracellular compartment or efflux from intracellular organelles such as Golgi apparatus. May transport copper ions as well. The transport mechanism remains to be elucidated. This is Zinc transporter ZIP11 (SLC39A11) from Bos taurus (Bovine).